Consider the following 163-residue polypeptide: Phosphopantetheine adenylyltransferase (163 aa).

Thr-10 serves as a coordination point for substrate. ATP is bound by residues 10–11 and His-18; that span reads TF. Residues Lys-42, Leu-74, and Arg-88 each coordinate substrate. Residues 89 to 91, Glu-99, and 124 to 130 contribute to the ATP site; these read GLR and NSFISST.

The protein belongs to the bacterial CoaD family. As to quaternary structure, homohexamer. The cofactor is Mg(2+).

The protein localises to the cytoplasm. It catalyses the reaction (R)-4'-phosphopantetheine + ATP + H(+) = 3'-dephospho-CoA + diphosphate. Its pathway is cofactor biosynthesis; coenzyme A biosynthesis; CoA from (R)-pantothenate: step 4/5. Functionally, reversibly transfers an adenylyl group from ATP to 4'-phosphopantetheine, yielding dephospho-CoA (dPCoA) and pyrophosphate. The protein is Phosphopantetheine adenylyltransferase of Shewanella oneidensis (strain ATCC 700550 / JCM 31522 / CIP 106686 / LMG 19005 / NCIMB 14063 / MR-1).